The following is a 154-amino-acid chain: Endoribonuclease YbeY (154 aa).

3 residues coordinate Zn(2+): His113, His117, and His123.

It belongs to the endoribonuclease YbeY family. Zn(2+) is required as a cofactor.

The protein resides in the cytoplasm. In terms of biological role, single strand-specific metallo-endoribonuclease involved in late-stage 70S ribosome quality control and in maturation of the 3' terminus of the 16S rRNA. This chain is Endoribonuclease YbeY, found in Vibrio cholerae serotype O1 (strain ATCC 39315 / El Tor Inaba N16961).